The chain runs to 202 residues: Ig delta chain C region (202 aa).

The disordered stretch occupies residues 32–58; sequence KSKTFKLPETRNSQSSKKANPTPQAKN. Positions 41-56 are enriched in polar residues; that stretch reads TRNSQSSKKANPTPQA. The 113-residue stretch at 66-178 folds into the Ig-like domain; the sequence is PTATKNIVGA…TKLNASKSLE (113 aa).

This chain is Ig delta chain C region, found in Rattus norvegicus (Rat).